Reading from the N-terminus, the 40-residue chain is Small polypeptide DEVIL 3 (40 aa).

The required for DVL/RTFL small polypeptide activity stretch occupies residues 9–40 (PCNKKLGGYLKEQKGRLYIIRRCVVMLICWHD). The chain crosses the membrane as a helical span at residues 12–28 (KKLGGYLKEQKGRLYII).

Belongs to the DVL/RTFL small polypeptides family. In terms of tissue distribution, mostly expressed in flowers and stems, and, to a lower extent, in roots and leaves.

The protein localises to the cell membrane. Small polypeptide acting as a regulatory molecule which coordinates cellular responses required for differentiation, growth and development, including leaves shape, pedicule elongation, inflorescence organization and fruit maturation, probably by restricting polar cell proliferation in lateral organs and coordinating socket cell recruitment and differentiation at trichome sites. This chain is Small polypeptide DEVIL 3, found in Arabidopsis thaliana (Mouse-ear cress).